A 128-amino-acid chain; its full sequence is Large ribosomal subunit protein bL19 (128 aa).

The protein belongs to the bacterial ribosomal protein bL19 family.

Functionally, this protein is located at the 30S-50S ribosomal subunit interface and may play a role in the structure and function of the aminoacyl-tRNA binding site. The protein is Large ribosomal subunit protein bL19 of Paraburkholderia xenovorans (strain LB400).